A 521-amino-acid polypeptide reads, in one-letter code: Importin subunit alpha-3 (521 aa).

Residue A2 is modified to N-acetylalanine. An IBB domain is found at 2 to 58 (ADNEKLDNQRLKNFKNKGRDLETMRRQRNEVVVELRKNKRDEHLLKRRNVPQEDICE). The Nuclear localization signal motif lies at 43-52 (EHLLKRRNVP). S60 is subject to Phosphoserine. Residues 66–106 (YRVQNTSLEAIVQNASSDNQGIQLSAVQAARKLLSSDRNPP) form an ARM 1; truncated repeat. 8 ARM repeats span residues 107 to 149 (IDDL…TSEQ), 150 to 194 (TQAV…CRDY), 195 to 233 (VISLGVVKPLLSFISPSIPITFLRNVTWVMVNLCRHKDP), 234 to 278 (PPPM…EQIQ), 279 to 318 (MVIDSGIVPHLVPLLSHQEVKVQTAALRAVGNIVTGTDEQ), 319 to 360 (TQVV…NQQQ), 361 to 400 (VQAVIDANLVPMIIHLLDKGDFGTQKEAAWAISNLTISGR), and 401 to 443 (KDQV…KMAE). Residues 137–229 (WALTNIASGT…VTWVMVNLCR (93 aa)) are NLS binding site (major). The NLS binding site (minor) stretch occupies residues 306–394 (RAVGNIVTGT…QKEAAWAISN (89 aa)). An ARM 10; atypical repeat occupies 447–485 (ETIANLIEECGGLEKIEQLQNHENEDIYKLAYEIIDQFF).

This sequence belongs to the importin alpha family. As to quaternary structure, forms a complex with importin subunit beta-1 (KPNB1). Interacts with SNAI1. Interacts with TALDO1 isoform 1. Interacts with CYB1. In terms of tissue distribution, detected more or less in all tissues examined (Ehrlich ascites tumor cells, testis, kidney, spleen, liver, heart, lung, thymus, skeletal muscle, cerebellum and brain (without cerebellum)). Multiple-sized transcripts were highly expressed, especially in testis.

The protein localises to the cytoplasm. It localises to the nucleus. Functions in nuclear protein import as an adapter protein for nuclear receptor KPNB1. Binds specifically and directly to substrates containing either a simple or bipartite NLS motif. Docking of the importin/substrate complex to the nuclear pore complex (NPC) is mediated by KPNB1 through binding to nucleoporin FxFG repeats and the complex is subsequently translocated through the pore by an energy requiring, Ran-dependent mechanism. At the nucleoplasmic side of the NPC, Ran binds to importin-beta and the three components separate and importin-alpha and -beta are re-exported from the nucleus to the cytoplasm where GTP hydrolysis releases Ran from importin. The directionality of nuclear import is thought to be conferred by an asymmetric distribution of the GTP- and GDP-bound forms of Ran between the cytoplasm and nucleus. Mediates nuclear import of AARS1, MRTFA and RANBP3. The sequence is that of Importin subunit alpha-3 (Kpna4) from Mus musculus (Mouse).